The primary structure comprises 52 residues: Defensin D2 (52 aa).

4 disulfides stabilise this stretch: C8/C52, C19/C39, C25/C46, and C29/C48.

Distributed in the epidermal cell layer of leaves and in the subepidermal layer region of stems. Not in roots.

The protein localises to the secreted. It localises to the cell wall. Functionally, antimicrobial peptide. Active against Fusarium spp., Gram-positive and Gram-negative bacterial pathogens. This is Defensin D2 from Spinacia oleracea (Spinach).